A 202-amino-acid chain; its full sequence is Putative pituitary tumor-transforming gene 3 protein (202 aa).

Positions 61-64 (RKAL) match the D-box motif. Positions 163–173 (PPSPLKMPSPP) match the SH3-binding motif.

The protein belongs to the securin family.

The protein localises to the cytoplasm. It localises to the nucleus. This Pan troglodytes (Chimpanzee) protein is Putative pituitary tumor-transforming gene 3 protein (PTTG3).